The chain runs to 680 residues: Galactose oxidase (680 aa).

A signal peptide spans 1–24; the sequence is MKHLLTLALCFSSINAVAVTVPHK. A propeptide spanning residues 25-41 is cleaved from the precursor; sequence AVGTGIPEGSLQFLSLR. The F5/8 type C domain occupies 42-189; it reads ASAPIGSAIS…SIAEINVFQA (148 aa). A disulfide bond links cysteine 59 and cysteine 68. Kelch repeat units lie at residues 223–268, 279–321, 323–372, 436–490, and 492–544; these read RVLM…HDMF, QIVV…TMSD, RVFT…LYRS, KILT…VLPD, and STFI…LLLP. The 3'-(S-cysteinyl)-tyrosine (Cys-Tyr) cross-link spans 269–313; sequence CPGISMDGNGQIVVTGGNDAKKTSLYDSSSDSWIPGPDMQVARGY. A Cu cation-binding site is contributed by tyrosine 313. Cu cation contacts are provided by tyrosine 536 and histidine 537. Catalysis depends on tyrosine 536, which acts as the Proton acceptor. Cysteine 556 and cysteine 559 are disulfide-bonded. Histidine 622 contacts Cu cation.

Monomer. Cu(2+) serves as cofactor. Post-translationally, galactose oxidase contains a protein-derived free radical cofactor. In the active state, Tyr-313, which is cross-linked to Cys-269 via a thioether bond, is oxidized to a radical and acts with Cu(2+) as a two-electron acceptor in the oxidation reaction. The cross-link is believed to modulate the redox potential of the tyrosyl radical, which is further stabilized by a stacking interaction with Trp-331 in the active site. The post-translational formation of the cross-link is closely linked to the propeptide cleavage event, and both are copper-dependent, autocatalytic processes. The propeptide may act as an intramolecular chaperone, facilitating thioester bond formation and copper binding by positioning of active-site residues, including copper ligands.

The protein resides in the secreted. It catalyses the reaction D-galactose + O2 = D-galacto-hexodialdose + H2O2. With respect to regulation, inhibited by diethyldithiocarbamate. In terms of biological role, catalyzes the sterospecific oxidation of primary alcohols to the corresponding aldehydes. The biologically relevant substrate of the enzyme is not known as the enzyme exhibits broad substrate specificity from small alcohols through sugars to oligo- and polysaccharides. The protein is Galactose oxidase (GAOA) of Gibberella zeae (Wheat head blight fungus).